The chain runs to 779 residues: Angiomotin-like protein 2 (779 aa).

Disordered regions lie at residues 41–215 and 263–308; these read GGAG…QYPH and QYLQ…TSGS. Composition is skewed to basic and acidic residues over residues 100–112 and 141–152; these read KGEELPTYEEAKA and RRQDEALRELRH. A required for interaction with CDH5 region spans residues 101 to 307; sequence GEELPTYEEA…SAQASSATSG (207 aa). Position 107 is a phosphotyrosine; by FGFR1 (Tyr107). Residues 160–169 are compositionally biased toward low complexity; that stretch reads ERLLQLSLER. The segment covering 177–193 has biased composition (polar residues); that stretch reads HMSSSHSFPQLARNQQG. Over residues 196–213 the composition is skewed to pro residues; sequence LRGPPAEGPESRGPPPQY. The required for interaction with CDH1 stretch occupies residues 220–307; the sequence is HETTTAVTDP…SAQASSATSG (88 aa). Residues 298–308 are compositionally biased toward low complexity; sequence SAQASSATSGS. A coiled-coil region spans residues 308-581; that stretch reads SAHLAQMEAV…KYLEERAMRQ (274 aa). Residues Lys347 and Lys408 each participate in a glycyl lysine isopeptide (Lys-Gly) (interchain with G-Cter in ubiquitin) cross-link. Disordered stretches follow at residues 522–543 and 679–753; these read RAQQRQAGAPGGSSGSGGSPEL and TQGW…GCSS. Over residues 530 to 539 the composition is skewed to gly residues; sequence APGGSSGSGG. Composition is skewed to polar residues over residues 680 to 690 and 725 to 740; these read QGWQGLSSSER and DGSTQTEGPPDSTSTC. Residues Ser759 and Ser762 each carry the phosphoserine modification. Residues 776–779 carry the PDZ-binding motif; the sequence is EILI.

It belongs to the angiomotin family. In terms of assembly, part of a complex composed of AMOTL2, MAGI1 and CDH5, within the complex AMOTL2 acts as a scaffold protein for the interaction of MAGI1 with CDH5. The complex is required for coupling actin fibers to cell junctions in endothelial cells. Within the complex AMOTL2 (via its N-terminus) interacts with CDH5. Interacts (via N-terminus) with MAGI1. Interacts (via N-terminus) with ACTB; the interaction facilitates binding of cell junction complexes to actin fibers in endothelial cells. Interacts with CDH1; the interaction may facilitate binding of radial actin fibers to cell junction complexes. Interacts with SRC. Interacts with YAP1; the interaction is required for ubiquitination of AMOTL2 and localization of YAP1 to tight junctions. Interacts with WWP1; the interaction facilitates WWP1 interaction with the Crumbs complex and subsequent WWP1 translocation to the plasma membrane. WWP1 interaction with the Crumbs complex promotes WWP1 monoubiquitination of AMOTL2 which subsequently activates the Hippo signaling pathway. When ubiquitinated interacts with LATS2 (via UBA domain); the interaction promotes LATS2 phosphorylation of YAP1. Interacts (via PPXY motif) with WWTR1/TAZ (via WW domain); the interaction promotes WWTR1/TAZ localization to the cytoplasm and thereby inhibition of its transcriptional properties. Interacts with PHLDB2; interaction may facilitate PHLDB2 localization to the myotube podosome cortex that surrounds the core. Post-translationally, monoubiquitinated at Lys-347 and Lys-408 by Crumbs complex-bound WWP1. De-ubiquitinated at Lys-347 and Lys-408 by USP9X; the interaction may be promoted by cell contact inhibition. Deubiquitination of AMOTL2 negatively regulates Hippo signaling activation. In terms of processing, phosphorylation at Tyr-107 is necessary for efficient binding to SRC and synergistically functioning with SRC to activate the downstream MAPK pathway.

It is found in the recycling endosome. The protein resides in the cytoplasm. Its subcellular location is the cell projection. It localises to the podosome. The protein localises to the cell junction. Its function is as follows. Regulates the translocation of phosphorylated SRC to peripheral cell-matrix adhesion sites. Required for proper architecture of actin filaments. Plays a role in coupling actin fibers to cell junctions in endothelial cells and is therefore required for correct endothelial cell morphology via facilitating transcellular transmission of mechanical force resulting in endothelial cell elongation. Required for the anchoring of radial actin fibers to CDH1 junction complexes at the cell membrane which facilitates organization of radial actin fiber structure and cellular response to contractile forces. This contributes to maintenance of cell area, size, shape, epithelial sheet organization and trophectoderm cell properties that facilitate blastocyst zona hatching. Inhibits the Wnt/beta-catenin signaling pathway, probably by recruiting CTNNB1 to recycling endosomes and hence preventing its translocation to the nucleus. Participates in angiogenesis. Activates the Hippo signaling pathway in response to cell contact inhibition via interaction with and ubiquitination by Crumbs complex-bound WWP1. Ubiquitinated AMOTL2 then interacts with LATS2 which in turn phosphorylates YAP1, excluding it from the nucleus and localizing it to the cytoplasm and tight junctions, therefore ultimately repressing YAP1-driven transcription of target genes. Acts to inhibit WWTR1/TAZ transcriptional coactivator activity via sequestering WWTR1/TAZ in the cytoplasm and at tight junctions. Regulates the size and protein composition of the podosome cortex and core at myofibril neuromuscular junctions. Selectively promotes FGF-induced MAPK activation through SRC. May play a role in the polarity, proliferation and migration of endothelial cells. The chain is Angiomotin-like protein 2 from Homo sapiens (Human).